The sequence spans 293 residues: MAELAQFAKMNGLGNAIIVADMRGRADRVRPEAAQRLASDPATHFDQIMAIHDPRLEGTENYIEIINSDGSVAQACGNGMRCVVQRLAAETGRPSFTFETIAGVLSAEEHANGLISVDMGKPRFGWQDIPLAEEFHDTRKIELQVGPIDKPVLHSPSVASMGNPHAIFWVEDDPYSYDLERFGPMLENHPIFPERANITIARVDSPEELTMRTWERGAGLTLACGSAACAAAVSAARTGRTGRGVKVNLPGGSLEILWRDDDHVIMTGPAEWEFSGRFDPATGAWERETEGAA.

Substrate-binding residues include asparagine 15, glutamine 47, and asparagine 67. Cysteine 76 serves as the catalytic Proton donor. Substrate contacts are provided by residues 77-78, asparagine 163, asparagine 197, and 215-216; these read GN and ER. The active-site Proton acceptor is cysteine 224. 225–226 provides a ligand contact to substrate; it reads GS.

Belongs to the diaminopimelate epimerase family. Homodimer.

It localises to the cytoplasm. The catalysed reaction is (2S,6S)-2,6-diaminopimelate = meso-2,6-diaminopimelate. It participates in amino-acid biosynthesis; L-lysine biosynthesis via DAP pathway; DL-2,6-diaminopimelate from LL-2,6-diaminopimelate: step 1/1. In terms of biological role, catalyzes the stereoinversion of LL-2,6-diaminopimelate (L,L-DAP) to meso-diaminopimelate (meso-DAP), a precursor of L-lysine and an essential component of the bacterial peptidoglycan. In Chelativorans sp. (strain BNC1), this protein is Diaminopimelate epimerase.